Here is a 290-residue protein sequence, read N- to C-terminus: Porphobilinogen deaminase (290 aa).

Position 237 is an S-(dipyrrolylmethanemethyl)cysteine (Cys237).

The protein belongs to the HMBS family. Monomer. The cofactor is dipyrromethane.

It carries out the reaction 4 porphobilinogen + H2O = hydroxymethylbilane + 4 NH4(+). Its pathway is porphyrin-containing compound metabolism; protoporphyrin-IX biosynthesis; coproporphyrinogen-III from 5-aminolevulinate: step 2/4. Its function is as follows. Tetrapolymerization of the monopyrrole PBG into the hydroxymethylbilane pre-uroporphyrinogen in several discrete steps. This chain is Porphobilinogen deaminase, found in Clostridium botulinum (strain ATCC 19397 / Type A).